Consider the following 157-residue polypeptide: SsrA-binding protein (157 aa).

The segment at 132–157 (VHDKRQAQKDKDWAREKDRLFKKAYK) is disordered. A compositionally biased stretch (basic and acidic residues) spans 135–157 (KRQAQKDKDWAREKDRLFKKAYK).

This sequence belongs to the SmpB family.

The protein localises to the cytoplasm. Required for rescue of stalled ribosomes mediated by trans-translation. Binds to transfer-messenger RNA (tmRNA), required for stable association of tmRNA with ribosomes. tmRNA and SmpB together mimic tRNA shape, replacing the anticodon stem-loop with SmpB. tmRNA is encoded by the ssrA gene; the 2 termini fold to resemble tRNA(Ala) and it encodes a 'tag peptide', a short internal open reading frame. During trans-translation Ala-aminoacylated tmRNA acts like a tRNA, entering the A-site of stalled ribosomes, displacing the stalled mRNA. The ribosome then switches to translate the ORF on the tmRNA; the nascent peptide is terminated with the 'tag peptide' encoded by the tmRNA and targeted for degradation. The ribosome is freed to recommence translation, which seems to be the essential function of trans-translation. The protein is SsrA-binding protein of Francisella tularensis subsp. novicida (strain U112).